A 100-amino-acid chain; its full sequence is MIREERLLKVLRAPHVSEKASTAMEKSNAIVLKVAKDATKAEIKAAVQKLFEVEVEGVNTLLVKGKTKRHGQRIGRRSDWKKAYVTLKEGQNMDFIGGAE.

This sequence belongs to the universal ribosomal protein uL23 family. Part of the 50S ribosomal subunit. Contacts protein L29, and trigger factor when it is bound to the ribosome.

In terms of biological role, one of the early assembly proteins it binds 23S rRNA. One of the proteins that surrounds the polypeptide exit tunnel on the outside of the ribosome. Forms the main docking site for trigger factor binding to the ribosome. This is Large ribosomal subunit protein uL23 from Photorhabdus laumondii subsp. laumondii (strain DSM 15139 / CIP 105565 / TT01) (Photorhabdus luminescens subsp. laumondii).